A 313-amino-acid polypeptide reads, in one-letter code: ADP,ATP carrier protein (313 aa).

Solcar repeat units follow at residues 11-104, 116-208, and 216-302; these read PPFV…FKKM, KWMA…IKPV, and NNFL…LQVL. 5 helical membrane passes run 13–40, 81–105, 114–134, 184–205, and 219–239; these read FVAD…IKLL, TANV…KKMF, YWKW…TSLL, FGPS…YDSI, and LASF…SYPL. Residues R86 and R98 each coordinate ADP. Residue R243 coordinates ADP. An important for transport activity region spans residues 243–248; that stretch reads RRRMMM. The Nucleotide carrier signature motif motif lies at 243–248; it reads RRRMMM. A helical transmembrane segment spans residues 279 to 299; that stretch reads AGANILRGVAGAGVLSIYDQL.

Belongs to the mitochondrial carrier (TC 2.A.29) family. Monomer.

The protein localises to the mitochondrion inner membrane. It carries out the reaction ADP(in) + ATP(out) = ADP(out) + ATP(in). The matrix-open state (m-state) is inhibited by the membrane-permeable bongkrekic acid (BKA). The cytoplasmic-open state (c-state) is inhibited by the membrane-impermeable toxic inhibitor carboxyatractyloside (CATR). Its function is as follows. ADP:ATP antiporter that mediates import of ADP into the mitochondrial matrix for ATP synthesis, and export of ATP out to fuel the cell. Cycles between the cytoplasmic-open state (c-state) and the matrix-open state (m-state): operates by the alternating access mechanism with a single substrate-binding site intermittently exposed to either the cytosolic (c-state) or matrix (m-state) side of the inner mitochondrial membrane. The sequence is that of ADP,ATP carrier protein (aac) from Neurospora crassa (strain ATCC 24698 / 74-OR23-1A / CBS 708.71 / DSM 1257 / FGSC 987).